The following is a 427-amino-acid chain: Inward rectifier potassium channel 2 (427 aa).

Residues 1–81 (MGSVRTNRYS…IFTTCVDIRW (81 aa)) lie on the Cytoplasmic side of the membrane. The residue at position 76 (Cys76) is an S-nitrosocysteine. Residues 82-106 (RWMLVIFCLAFVLSWLFFGCVFWLI) form a helical membrane-spanning segment. Topologically, residues 107-128 (ALLHGDLDASKESKACVSEVNS) are extracellular. Residues 129–140 (FTAAFLFSIETQ) constitute an intramembrane region (helical; Pore-forming). The pore-forming intramembrane region spans 141 to 147 (TTIGYGF). The Selectivity filter motif lies at 142–147 (TIGYGF). At 148 to 156 (RCVTDECPI) the chain is on the extracellular side. The helical transmembrane segment at 157-178 (AVFMVVFQSIVGCIIDAFIIGA) threads the bilayer. Residues 179-427 (VMAKMAKPKK…PRPLRRESEI (249 aa)) are Cytoplasmic-facing. The polyphosphoinositide (PIP2)-binding stretch occupies residues 181–208 (AKMAKPKKRNETLVFSHNAVIAMRDGKL). The disordered stretch occupies residues 384 to 427 (SKEEDDSENGVPESTSTDTPPDIDLHNQASVPLEPRPLRRESEI). The short motif at 425–427 (SEI) is the PDZ-binding element.

It belongs to the inward rectifier-type potassium channel (TC 1.A.2.1) family. KCNJ2 subfamily. As to quaternary structure, homotetramer. Homomultimeric and heteromultimeric association with KCNJ4/Kir2.3. Can form heteromeric channels with Kir2.6/KCNJ18. Associates, via its PDZ-recognition domain, with a complex containing LIN7A, LIN7B, LIN7C, DLG1, CASK and APBA1. In terms of processing, S-nitrosylation increases the open probability and inward rectifying currents.

Its subcellular location is the cell membrane. The protein localises to the sarcolemma. The protein resides in the T-tubule. It catalyses the reaction K(+)(in) = K(+)(out). Activated by phosphatidylinositol 4,5 biphosphate (PtdIns(4,5)P2). Its function is as follows. Inward rectifier potassium channels are characterized by a greater tendency to allow potassium to flow into the cell rather than out of it. Their voltage dependence is regulated by the concentration of extracellular potassium; as external potassium is raised, the voltage range of the channel opening shifts to more positive voltages. The inward rectification is mainly due to the blockage of outward current by internal magnesium. Can be blocked by extracellular barium and cesium. Probably participates in establishing action potential waveform and excitability of neuronal and muscle tissues. In Sus scrofa (Pig), this protein is Inward rectifier potassium channel 2 (KCNJ2).